We begin with the raw amino-acid sequence, 1297 residues long: Phosphoribosylformylglycinamidine synthase (1297 aa).

ATP contacts are provided by residues 307-318 (GASTGSGGEIRD) and alanine 678. Positions 718, 722, and 886 each coordinate Mg(2+). The Glutamine amidotransferase type-1 domain occupies 1044-1297 (MAILREQGVN…MFQNARKYFG (254 aa)). Cysteine 1137 serves as the catalytic Nucleophile. Residues histidine 1262 and glutamate 1264 contribute to the active site.

The protein in the N-terminal section; belongs to the FGAMS family. In terms of assembly, monomer.

The protein resides in the cytoplasm. It carries out the reaction N(2)-formyl-N(1)-(5-phospho-beta-D-ribosyl)glycinamide + L-glutamine + ATP + H2O = 2-formamido-N(1)-(5-O-phospho-beta-D-ribosyl)acetamidine + L-glutamate + ADP + phosphate + H(+). Its pathway is purine metabolism; IMP biosynthesis via de novo pathway; 5-amino-1-(5-phospho-D-ribosyl)imidazole from N(2)-formyl-N(1)-(5-phospho-D-ribosyl)glycinamide: step 1/2. Functionally, phosphoribosylformylglycinamidine synthase involved in the purines biosynthetic pathway. Catalyzes the ATP-dependent conversion of formylglycinamide ribonucleotide (FGAR) and glutamine to yield formylglycinamidine ribonucleotide (FGAM) and glutamate. The polypeptide is Phosphoribosylformylglycinamidine synthase (Vibrio cholerae serotype O1 (strain ATCC 39315 / El Tor Inaba N16961)).